A 129-amino-acid polypeptide reads, in one-letter code: Small ribosomal subunit protein uS11 (129 aa).

This sequence belongs to the universal ribosomal protein uS11 family. As to quaternary structure, part of the 30S ribosomal subunit. Interacts with proteins S7 and S18. Binds to IF-3.

Its function is as follows. Located on the platform of the 30S subunit, it bridges several disparate RNA helices of the 16S rRNA. Forms part of the Shine-Dalgarno cleft in the 70S ribosome. This is Small ribosomal subunit protein uS11 from Halalkalibacterium halodurans (strain ATCC BAA-125 / DSM 18197 / FERM 7344 / JCM 9153 / C-125) (Bacillus halodurans).